The following is a 41-amino-acid chain: Omega-theraphotoxin-Hg1a (41 aa).

3 cysteine pairs are disulfide-bonded: Cys7-Cys21, Cys14-Cys26, and Cys20-Cys33.

This sequence belongs to the neurotoxin 10 (Hwtx-1) family. 56 (SNX-482) subfamily. Expressed by the venom gland.

It localises to the secreted. Functionally, toxin that blocks vertebrate P/Q-type (Cav2.1/CACNA1A) and R-type (Cav2.3/CACNA1E) voltage-gated calcium channels. Also inhibits sodium channels (Nav) in bovine chromaffin cells by delaying sodium channel inactivation. In Hysterocrates gigas (Cameroon red baboon tarantula), this protein is Omega-theraphotoxin-Hg1a.